Reading from the N-terminus, the 251-residue chain is Triosephosphate isomerase (251 aa).

12-14 is a binding site for substrate; it reads NWK. H98 serves as the catalytic Electrophile. Residue E168 is the Proton acceptor of the active site. Substrate is bound by residues G174, S213, and 234 to 235; that span reads GG.

This sequence belongs to the triosephosphate isomerase family. Homodimer.

It is found in the cytoplasm. The catalysed reaction is D-glyceraldehyde 3-phosphate = dihydroxyacetone phosphate. Its pathway is carbohydrate biosynthesis; gluconeogenesis. The protein operates within carbohydrate degradation; glycolysis; D-glyceraldehyde 3-phosphate from glycerone phosphate: step 1/1. In terms of biological role, involved in the gluconeogenesis. Catalyzes stereospecifically the conversion of dihydroxyacetone phosphate (DHAP) to D-glyceraldehyde-3-phosphate (G3P). The protein is Triosephosphate isomerase of Bradyrhizobium diazoefficiens (strain JCM 10833 / BCRC 13528 / IAM 13628 / NBRC 14792 / USDA 110).